Consider the following 298-residue polypeptide: N-acetylmuramic acid 6-phosphate etherase (298 aa).

The SIS domain maps to 55–218; that stretch reads IHAQVSGGGR…STGLMIKSGK (164 aa). Glutamate 83 functions as the Proton donor in the catalytic mechanism. Residue glutamate 114 is part of the active site.

This sequence belongs to the GCKR-like family. MurNAc-6-P etherase subfamily. As to quaternary structure, homodimer.

The catalysed reaction is N-acetyl-D-muramate 6-phosphate + H2O = N-acetyl-D-glucosamine 6-phosphate + (R)-lactate. The protein operates within amino-sugar metabolism; 1,6-anhydro-N-acetylmuramate degradation. It participates in amino-sugar metabolism; N-acetylmuramate degradation. Its pathway is cell wall biogenesis; peptidoglycan recycling. Specifically catalyzes the cleavage of the D-lactyl ether substituent of MurNAc 6-phosphate, producing GlcNAc 6-phosphate and D-lactate. Together with AnmK, is also required for the utilization of anhydro-N-acetylmuramic acid (anhMurNAc) either imported from the medium or derived from its own cell wall murein, and thus plays a role in cell wall recycling. The polypeptide is N-acetylmuramic acid 6-phosphate etherase (Escherichia coli O8 (strain IAI1)).